The chain runs to 328 residues: Urokinase plasminogen activator surface receptor (328 aa).

A signal peptide spans 1–24 (MGLLRRRLLLLVVVVTTCVPASQG). 3 consecutive UPAR/Ly6 domains span residues 25–118 (LRCI…GRYL), 118–213 (LECA…PPNG), and 214–299 (FQCY…RPTG). Cystine bridges form between Cys27–Cys48, Cys30–Cys36, and Cys41–Cys69. Residue Asn76 is glycosylated (N-linked (GlcNAc...) asparagine). 11 disulfide bridges follow: Cys95-Cys100, Cys120-Cys147, Cys123-Cys130, Cys140-Cys169, Cys175-Cys192, Cys193-Cys198, Cys216-Cys244, Cys219-Cys227, Cys237-Cys263, Cys269-Cys288, and Cys289-Cys294. N-linked (GlcNAc...) asparagine glycosylation is found at Asn184, Asn194, Asn222, Asn255, Asn283, and Asn290. The GPI-anchor amidated glycine moiety is linked to residue Gly299. Positions 300-328 (GAPGPGPAHLILIASLLLTLRLWGIPLWT) are cleaved as a propeptide — removed in mature form.

As to quaternary structure, monomer. Interacts (via the UPAR/Ly6 domains) with SRPX2. Interacts with MRC2. Interacts with SORL1 (via N-terminal ectodomain); this interaction decreases PLAUR internalization. The ternary complex composed of PLAUR-PLAU-SERPINE1 also interacts with SORL1. Interacts with CD82; this interaction prevents PLAUR from binding to its high affinity ligand PLAU.

The protein localises to the cell membrane. It is found in the secreted. Acts as a receptor for urokinase plasminogen activator. Plays a role in localizing and promoting plasmin formation. Mediates the proteolysis-independent signal transduction activation effects of U-PA. The protein is Urokinase plasminogen activator surface receptor (Plaur) of Rattus norvegicus (Rat).